We begin with the raw amino-acid sequence, 626 residues long: Putative ankyrin repeat protein L768 (626 aa).

5 ANK repeats span residues 217 to 246, 333 to 362, 421 to 451, 515 to 545, and 547 to 571; these read NLYD…EYDF, DLDM…NINK, TAEN…TEHI, SNLK…NQDY, and QWAL…NVNP.

This Acanthamoeba polyphaga mimivirus (APMV) protein is Putative ankyrin repeat protein L768.